The following is a 151-amino-acid chain: Ribonuclease H (151 aa).

Residues 2 to 143 (SDDWVEIYTD…ADLLANRGVV (142 aa)) form the RNase H type-1 domain. Mg(2+) contacts are provided by Asp-11, Glu-49, Asp-71, and Asp-135.

It belongs to the RNase H family. Monomer. Requires Mg(2+) as cofactor.

The protein localises to the cytoplasm. It catalyses the reaction Endonucleolytic cleavage to 5'-phosphomonoester.. Endonuclease that specifically degrades the RNA of RNA-DNA hybrids. This chain is Ribonuclease H, found in Stutzerimonas stutzeri (strain A1501) (Pseudomonas stutzeri).